The sequence spans 286 residues: 4-diphosphocytidyl-2-C-methyl-D-erythritol kinase (286 aa).

Lys-11 is an active-site residue. 94-104 (PMGGGIGGGSS) contacts ATP. Asp-136 is a catalytic residue.

This sequence belongs to the GHMP kinase family. IspE subfamily.

It catalyses the reaction 4-CDP-2-C-methyl-D-erythritol + ATP = 4-CDP-2-C-methyl-D-erythritol 2-phosphate + ADP + H(+). Its pathway is isoprenoid biosynthesis; isopentenyl diphosphate biosynthesis via DXP pathway; isopentenyl diphosphate from 1-deoxy-D-xylulose 5-phosphate: step 3/6. In terms of biological role, catalyzes the phosphorylation of the position 2 hydroxy group of 4-diphosphocytidyl-2C-methyl-D-erythritol. In Pseudomonas putida (strain W619), this protein is 4-diphosphocytidyl-2-C-methyl-D-erythritol kinase.